A 657-amino-acid polypeptide reads, in one-letter code: Sodium/glucose cotransporter 4 (657 aa).

Residues 1 to 24 (MPASPEPVTATPEPEEVPAKFTLE) are Extracellular-facing. Residues 25-45 (AADIAVVVVYFVFVLAVGIWS) form a helical membrane-spanning segment. Residues 46–79 (SIRANRGTVGGYFLAGRSMTWWPIGASLMSSNVG) lie on the Cytoplasmic side of the membrane. Residues 80–100 (SGLFIGLAGTGAAGGLAVGGF) traverse the membrane as a helical segment. At 101-104 (EWNA) the chain is on the extracellular side. A helical transmembrane segment spans residues 105-125 (AWVLIALGWIFVPVYISAGVV). Topologically, residues 126-147 (TMPEYLRKRFGGQRIRIYMSVL) are cytoplasmic. The chain crosses the membrane as a helical span at residues 148–168 (SLILYILTKISTDIFSGALFI). Residues 169 to 180 (QVSLGWDLYLST) lie on the Extracellular side of the membrane. Residues 181-201 (VILLAVTALYTIAGGLTAVIY) traverse the membrane as a helical segment. Over 202-207 (TDALQT) the chain is Cytoplasmic. A helical membrane pass occupies residues 208-228 (VIMVIGAFVLMFIAFDKVGWY). The Extracellular segment spans residues 229–265 (EGLLVQYEKAAPALTVPNTTCHLPRSDAFHIFRDPVT). Residue asparagine 246 is glycosylated (N-linked (GlcNAc...) asparagine). The helical transmembrane segment at 266–286 (GDIPWPGLIFGLTVLATWVWC) threads the bilayer. Over 287–307 (TDQVIVQRSLSAKNLSHAKAG) the chain is Cytoplasmic. The chain crosses the membrane as a helical span at residues 308–328 (SVLGGYLKVFPMFFVVMPGMI). At 329-373 (SRALYPDEVACVDPDECQKICGAKVGCSNIAYPKLVVELMPVGMR) the chain is on the extracellular side. A helical membrane pass occupies residues 374–396 (GLMIAVMMAALMSSLTSIFNSSS). Residues 397-417 (TLFTMDIWQRIRPRASEKELM) are Cytoplasmic-facing. The chain crosses the membrane as a helical span at residues 418–438 (VVGRVFILLLVALSIVWIPVI). Topologically, residues 439–451 (QTANSGQLFDYIQ) are extracellular. Residues 452-472 (AITSFLSPPITTVFIMAIFWG) traverse the membrane as a helical segment. Topologically, residues 473–478 (RVNEQG) are cytoplasmic. The helical transmembrane segment at 479–499 (AFWGLMVGLVVGMVRMIMEFV) threads the bilayer. The Extracellular portion of the chain corresponds to 500 to 520 (YGTPSCGETDLRPSLLKDVHY). A helical transmembrane segment spans residues 521 to 541 (LYFALILLALTVLIITAVSLC). The Cytoplasmic segment spans residues 542–636 (TAPIPEKHLV…SIEEDHMWKT (95 aa)). The helical transmembrane segment at 637 to 657 (VCNVNALILLTANVFLWGYFA) threads the bilayer.

This sequence belongs to the sodium:solute symporter (SSF) (TC 2.A.21) family.

The protein resides in the membrane. In terms of biological role, probable sodium-dependent sugar transporter. In Danio rerio (Zebrafish), this protein is Sodium/glucose cotransporter 4 (slc5a9).